We begin with the raw amino-acid sequence, 610 residues long: Glutamine--fructose-6-phosphate aminotransferase [isomerizing] (610 aa).

The active-site Nucleophile; for GATase activity is the C2. A Glutamine amidotransferase type-2 domain is found at 2 to 218 (CGIVGAVAQR…EGDVAEMTRR (217 aa)). 2 SIS domains span residues 286–426 (AAEI…QQQR) and 459–600 (LAED…VDQP). Catalysis depends on K605, which acts as the For Fru-6P isomerization activity.

As to quaternary structure, homodimer.

It localises to the cytoplasm. It carries out the reaction D-fructose 6-phosphate + L-glutamine = D-glucosamine 6-phosphate + L-glutamate. Its function is as follows. Catalyzes the first step in hexosamine metabolism, converting fructose-6P into glucosamine-6P using glutamine as a nitrogen source. The chain is Glutamine--fructose-6-phosphate aminotransferase [isomerizing] from Vibrio cholerae serotype O1 (strain ATCC 39315 / El Tor Inaba N16961).